A 267-amino-acid chain; its full sequence is MAEPVQEELSVLAAIFCRPHEWEVLSRSETDGTVFRIHTKAEGFMDVDIPLELVFHLPVNYPSCLPGISINSEQLTRAQCVTVKENLLEQAESLLSEPMVHELVLWIQQNLRHILSQPETGSGSEKCTFSTSTTMDDGLWITLLHLDHMRAKTKYVKIVEKWASDLRLTGRLMFMGKIILILLQGDRNNLKEYLILQKTSKVDVDSSGKKCKEKMISVLFETKVQTEHKRFLAFEVKEYSALDELQKEFETAGLKKLFSEFVLALVK.

In terms of domain architecture, RWD spans 7 to 114 (EELSVLAAIF…LWIQQNLRHI (108 aa)). 2 interaction with UBE2I/UBC9 regions span residues 13–15 (AAI) and 100–102 (VHE).

Isoform 1 and isoform 2 interact with UBE2I/UBC9. Isoform 1 shows a greater interaction with NFKBIA and HIF1A as compared to isoform 2. Isoform 2 interacts with NCOA2 and NR3C1. Isoform 1 and isoform 2 are expressed in glioma tumors (at protein level). Expressed in a wide number of tissues with highest expression in cerebellum, pituitary, heart, kidney, liver, stomach, pancreas, prostate and spleen. Low levels in thalamus, spinal cord, esophagus, thymus, lung and peripheral blood leukocytes. A higher level expression seen in pituitary tumors as compared to the pituitary gland.

It is found in the nucleus. It localises to the cytoplasm. Its function is as follows. Enhancer of SUMO conjugation. Via its interaction with UBE2I/UBC9, increases SUMO conjugation to proteins by promoting the binding of E1 and E2 enzymes, thioester linkage between SUMO and UBE2I/UBC9 and transfer of SUMO to specific target proteins which include HIF1A, PIAS, NFKBIA, NR3C1 and TOP1. Isoform 1 and isoform 2 positively regulate the NF-kappa-B signaling pathway by enhancing the sumoylation of NF-kappa-B inhibitor alpha (NFKBIA), promoting its stabilization which consequently leads to an increased inhibition of NF-kappa-B transcriptional activity. Isoform 1 and isoform 2 negatively regulate the hypoxia-inducible factor-1 alpha (HIF1A) signaling pathway by increasing the sumoylation of HIF1A, promoting its stabilization, transcriptional activity and the expression of its target gene VEGFA during hypoxia. Isoform 2 promotes the sumoylation and transcriptional activity of the glucocorticoid receptor NR3C1 and enhances the interaction of SUMO1 and NR3C1 with UBE2I/UBC9. Has no effect on ubiquitination. This is RWD domain-containing protein 3 (RWDD3) from Homo sapiens (Human).